Here is a 464-residue protein sequence, read N- to C-terminus: Alpha-2A adrenergic receptor (464 aa).

At 1–47 the chain is on the extracellular side; sequence MFRQEQRWPRQLWPMGSLQPDSGNASWNGTEGPGGGTRATPYSLQVT. A disordered region spans residues 13–34; it reads WPMGSLQPDSGNASWNGTEGPG. The span at 19 to 29 shows a compositional bias: polar residues; it reads QPDSGNASWNG. N-linked (GlcNAc...) asparagine glycans are attached at residues Asn24 and Asn28. Residues 48–73 form a helical membrane-spanning segment; sequence VTLVCLVGLLILLTVFGNVLVIIAVF. Over 74 to 84 the chain is Cytoplasmic; the sequence is TSRALKAPQNL. A helical transmembrane segment spans residues 85-110; sequence FLVSLASADILVATLVIPFSLANEVM. The Extracellular portion of the chain corresponds to 111-120; that stretch reads GYWYFGKAWC. A disulfide bridge connects residues Cys120 and Cys201. A helical membrane pass occupies residues 121–143; the sequence is EIYLALDVLFCTSSIVHLCAISL. Topologically, residues 144–163 are cytoplasmic; that stretch reads DRYWSITQAIEYNLKRTPRR. A helical transmembrane segment spans residues 164-187; sequence IKAIIVTVWVISAVISFPPLISFE. Residues 188–206 lie on the Extracellular side of the membrane; it reads KAGGGGQQPAEPRCEINDQ. A helical membrane pass occupies residues 207 to 231; that stretch reads KWYVISSSIGSFFAPCLIMILVYVR. At 232–388 the chain is on the cytoplasmic side; sequence IYQIAKRRTR…RQNREKRFTF (157 aa). The interval 240 to 378 is disordered; sequence TRVPPSRRGP…GGAKASRWRG (139 aa). A compositionally biased stretch (low complexity) spans 251–268; sequence AHAAAPPGGAERRPNGLG. Positions 312–329 are enriched in basic and acidic residues; that stretch reads SSEHAERPPGARRPERGL. Residue Ser345 is modified to Phosphoserine. The segment covering 354–363 has biased composition (gly residues); it reads AGSGTSGSGP. At Arg367 the chain carries Omega-N-methylarginine. The helical transmembrane segment at 389–413 threads the bilayer; it reads VLAVVIGVFVVCWFPFFFTYTLTAV. Over 414 to 423 the chain is Extracellular; the sequence is GCSVPRTLFK. Residues 424 to 444 form a helical membrane-spanning segment; sequence FFFWFGYCNSSLNPVIYTIFN. At 445–464 the chain is on the cytoplasmic side; it reads HDFRRAFKKILCRGDRKRIV. Cys456 is lipidated: S-palmitoyl cysteine.

This sequence belongs to the G-protein coupled receptor 1 family. Adrenergic receptor subfamily. ADRA2A sub-subfamily. As to quaternary structure, component of the ADA2A-containing complex (ATAC), composed of KAT14, KAT2A, TADA2L, TADA3L, ZZ3, MBIP, WDR5, YEATS2, CCDC101 and DR1.

It localises to the cell membrane. In terms of biological role, alpha-2 adrenergic receptors mediate the catecholamine-induced inhibition of adenylate cyclase through the action of G proteins. Component of the ATAC complex, a complex with histone acetyltransferase activity on histones H3 and H4. This Cavia porcellus (Guinea pig) protein is Alpha-2A adrenergic receptor.